We begin with the raw amino-acid sequence, 84 residues long: Large ribosomal subunit protein bL31B (84 aa).

This sequence belongs to the bacterial ribosomal protein bL31 family. Type B subfamily. In terms of assembly, part of the 50S ribosomal subunit.

In Alkalilimnicola ehrlichii (strain ATCC BAA-1101 / DSM 17681 / MLHE-1), this protein is Large ribosomal subunit protein bL31B.